The sequence spans 398 residues: MENETVSELNQTQLQPRAVVALEYQVVTILLVLIICGLGIVGNIMVVLVVMRTKHMRTPTNCYLVSLAVADLMVLVAAGLPNITDSIYGSWVYGYVGCLCITYLQYLGINASSCSITAFTIERYIAICHPIKAQFLCTFSRAKKIIIFVWAFTSLYCMLWFFLLDLNISTYKDAIVISCGYKISRNYYSPIYLMDFGVFYVVPMILATVLYGFIARILFLNPIPSDPKENSKTWKNDSTHQNTNLNVNTSNRCFNSTVSSRKQVTKMLAVVVILFALLWMPYRTLVVVNSFLSSPFQENWFLLFCRICIYLNSAINPVIYNLMSQKFRAAFRKLCNCKQKPTEKPANYSVALNYSVIKESDHFSTELDDITVTDTYLSATKVSFDDTCLASEVSFSQS.

Residues 1–28 (MENETVSELNQTQLQPRAVVALEYQVVT) are Extracellular-facing. Residues Asn-3 and Asn-10 are each glycosylated (N-linked (GlcNAc...) asparagine). Residues 29–51 (ILLVLIICGLGIVGNIMVVLVVM) form a helical membrane-spanning segment. Residues 52–61 (RTKHMRTPTN) lie on the Cytoplasmic side of the membrane. The helical transmembrane segment at 62–83 (CYLVSLAVADLMVLVAAGLPNI) threads the bilayer. Over 84 to 99 (TDSIYGSWVYGYVGCL) the chain is Extracellular. Cys-98 and Cys-179 are oxidised to a cystine. Residues 100 to 121 (CITYLQYLGINASSCSITAFTI) form a helical membrane-spanning segment. The Cytoplasmic portion of the chain corresponds to 122–144 (ERYIAICHPIKAQFLCTFSRAKK). A helical membrane pass occupies residues 145–168 (IIIFVWAFTSLYCMLWFFLLDLNI). The Extracellular segment spans residues 169–193 (STYKDAIVISCGYKISRNYYSPIYL). The helical transmembrane segment at 194 to 215 (MDFGVFYVVPMILATVLYGFIA) threads the bilayer. Residues 216–266 (RILFLNPIPSDPKENSKTWKNDSTHQNTNLNVNTSNRCFNSTVSSRKQVTK) lie on the Cytoplasmic side of the membrane. A helical transmembrane segment spans residues 267-288 (MLAVVVILFALLWMPYRTLVVV). At 289 to 296 (NSFLSSPF) the chain is on the extracellular side. A helical transmembrane segment spans residues 297 to 319 (QENWFLLFCRICIYLNSAINPVI). Residues 320-398 (YNLMSQKFRA…LASEVSFSQS (79 aa)) are Cytoplasmic-facing.

It belongs to the G-protein coupled receptor 1 family.

Its subcellular location is the cell membrane. Receptor for thyrotropin-releasing hormone (TRH). Upon ligand binding, this G-protein-coupled receptor triggers activation of the phosphatidylinositol (IP3)-calcium-protein kinase C (PKC) pathway. This Homo sapiens (Human) protein is Thyrotropin-releasing hormone receptor (TRHR).